Consider the following 503-residue polypeptide: MGGEVRVLLLLGLLHWVGGSEGRKTWRRRGQQPPQPPPPPPLPQRAEVEPGAGQPVESFPLDFTAVEGNMDSFMAQVKSLAQSLYPCSAQQLNEDLRLHLLLNTSVTCNDGSPAGYYLKESKGSRRWLLFLEGGWYCFNRENCDSRYSTMRRLMSSKDWPHTRTGTGILSSQPEENPHWWNANMVFIPYCSSDVWSGASPKSDKNEYAFMGSLIIQEVVRELLGKGLSGAKVLLLAGSSAGGTGVLLNVDRVAELLEELGYPSIQVRGLADSGWFLDNKQYRRSDCIDTINCAPTDAIRRGIRYWSGMVPERCQRQFKEGEEWNCFFGYKVYPTLRCPVFVVQWLFDEAQLTVDNVHLTGQPVQEGQWLYIQNLGRELRGTLKDVQASFAPACLSHEIIIRSYWTDVQVKGTSLPRALHCWDRSFHDSHKASKTPMKGCPFHLVDSCPWPHCNPSCPTIRDQFTGQEMNVAQFLMHMGFDVQTVAQQQGMEPSKLLGMLSNGN.

Residues 1 to 19 form the signal peptide; sequence MGGEVRVLLLLGLLHWVGG. The tract at residues 23–53 is disordered; sequence RKTWRRRGQQPPQPPPPPPLPQRAEVEPGAG. Pro residues predominate over residues 33 to 43; the sequence is PPQPPPPPPLP. Phosphoserine is present on S88. N103 carries an N-linked (GlcNAc...) asparagine glycan. Residues S239, D347, and H396 each act as charge relay system in the active site.

This sequence belongs to the pectinacetylesterase family. Notum subfamily. Widely expressed. Expressed in lung, ovary, kidney, liver and brain. Not detected in thymus, heart, spleen, stomach, skeletal muscle and bone marrow.

It localises to the secreted. It carries out the reaction [Wnt protein]-O-(9Z)-hexadecenoyl-L-serine + H2O = [Wnt protein]-L-serine + (9Z)-hexadecenoate + H(+). Its function is as follows. Carboxylesterase that acts as a key negative regulator of the Wnt signaling pathway by specifically mediating depalmitoleoylation of WNT proteins. Serine palmitoleoylation of WNT proteins is required for efficient binding to frizzled receptors. The polypeptide is Palmitoleoyl-protein carboxylesterase NOTUM (Mus musculus (Mouse)).